We begin with the raw amino-acid sequence, 893 residues long: Alanine--tRNA ligase (893 aa).

Positions 573, 577, 676, and 680 each coordinate Zn(2+). Residues 853–872 (LGGGGGGKDDLAQGGGQDPS) form a disordered region.

The protein belongs to the class-II aminoacyl-tRNA synthetase family. Zn(2+) is required as a cofactor.

The protein resides in the cytoplasm. The enzyme catalyses tRNA(Ala) + L-alanine + ATP = L-alanyl-tRNA(Ala) + AMP + diphosphate. Catalyzes the attachment of alanine to tRNA(Ala) in a two-step reaction: alanine is first activated by ATP to form Ala-AMP and then transferred to the acceptor end of tRNA(Ala). Also edits incorrectly charged Ser-tRNA(Ala) and Gly-tRNA(Ala) via its editing domain. The sequence is that of Alanine--tRNA ligase from Kineococcus radiotolerans (strain ATCC BAA-149 / DSM 14245 / SRS30216).